Consider the following 301-residue polypeptide: ADP-ribosyl cyclase/cyclic ADP-ribose hydrolase 1 (301 aa).

At 1–21 (MANCEFSPVSGDKPCCRLSRR) the chain is on the cytoplasmic side. The helical; Signal-anchor for type II membrane protein transmembrane segment at 22–43 (AQVCLGVCLLVLLILVVVVAVV) threads the bilayer. Residues 44–301 (LPRWRQQWSG…PEDSSCLSGI (258 aa)) are Extracellular-facing. 3 disulfides stabilise this stretch: cysteine 68–cysteine 83, cysteine 100–cysteine 181, and cysteine 161–cysteine 174. Residue asparagine 101 is glycosylated (N-linked (GlcNAc...) asparagine). Cysteine 120 is a catalytic residue. N-linked (GlcNAc...) asparagine glycosylation is present at asparagine 121. Cysteine 202 is a catalytic residue. N-linked (GlcNAc...) asparagine glycosylation is found at asparagine 210 and asparagine 220. 2 cysteine pairs are disulfide-bonded: cysteine 255–cysteine 276 and cysteine 288–cysteine 297.

It belongs to the ADP-ribosyl cyclase family. Homodimer.

It is found in the cell surface. The protein localises to the membrane. It catalyses the reaction NAD(+) = cyclic ADP-beta-D-ribose + nicotinamide + H(+). It carries out the reaction 2'-phospho-cyclic ADP-ribose + nicotinate = nicotinate-adenine dinucleotide phosphate. The catalysed reaction is NAD(+) + H2O = ADP-D-ribose + nicotinamide + H(+). The enzyme catalyses nicotinate + NADP(+) = nicotinate-adenine dinucleotide phosphate + nicotinamide. With respect to regulation, ATP inhibits the cADPR hydrolyzing activity. Its function is as follows. Synthesizes cyclic ADP-ribose (cADPR), a second messenger for glucose-induced insulin secretion. Synthesizes the Ca(2+) mobilizer nicotinate-adenine dinucleotide phosphate, NAADP(+), from 2'-phospho-cADPR and nicotinic acid, as well as from NADP(+) and nicotinic acid. Also has cADPR hydrolase activity. The sequence is that of ADP-ribosyl cyclase/cyclic ADP-ribose hydrolase 1 (CD38) from Macaca fascicularis (Crab-eating macaque).